The chain runs to 148 residues: Nucleoside diphosphate kinase (148 aa).

Positions 9, 57, 85, 91, 102, and 112 each coordinate ATP. Position 91 is a phosphothreonine (Thr-91). His-115 functions as the Pros-phosphohistidine intermediate in the catalytic mechanism. Ser-122 carries the phosphoserine modification.

This sequence belongs to the NDK family. In terms of assembly, homotetramer. The cofactor is Mg(2+).

The protein resides in the cytoplasm. It catalyses the reaction a 2'-deoxyribonucleoside 5'-diphosphate + ATP = a 2'-deoxyribonucleoside 5'-triphosphate + ADP. The enzyme catalyses a ribonucleoside 5'-diphosphate + ATP = a ribonucleoside 5'-triphosphate + ADP. Functionally, major role in the synthesis of nucleoside triphosphates other than ATP. The ATP gamma phosphate is transferred to the NDP beta phosphate via a ping-pong mechanism, using a phosphorylated active-site intermediate. This Bacillus cereus (strain ATCC 10987 / NRS 248) protein is Nucleoside diphosphate kinase.